The following is a 438-amino-acid chain: UDP-N-acetylmuramoylalanine--D-glutamate ligase (438 aa).

Residue glycine 112–threonine 118 coordinates ATP.

The protein belongs to the MurCDEF family.

Its subcellular location is the cytoplasm. It carries out the reaction UDP-N-acetyl-alpha-D-muramoyl-L-alanine + D-glutamate + ATP = UDP-N-acetyl-alpha-D-muramoyl-L-alanyl-D-glutamate + ADP + phosphate + H(+). It participates in cell wall biogenesis; peptidoglycan biosynthesis. Cell wall formation. Catalyzes the addition of glutamate to the nucleotide precursor UDP-N-acetylmuramoyl-L-alanine (UMA). This chain is UDP-N-acetylmuramoylalanine--D-glutamate ligase, found in Shigella sonnei (strain Ss046).